The primary structure comprises 185 residues: Large ribosomal subunit protein uL5 (185 aa).

It belongs to the universal ribosomal protein uL5 family. Part of the 50S ribosomal subunit; part of the 5S rRNA/L5/L18/L25 subcomplex. Contacts the 5S rRNA and the P site tRNA. Forms a bridge to the 30S subunit in the 70S ribosome.

This is one of the proteins that bind and probably mediate the attachment of the 5S RNA into the large ribosomal subunit, where it forms part of the central protuberance. In the 70S ribosome it contacts protein S13 of the 30S subunit (bridge B1b), connecting the 2 subunits; this bridge is implicated in subunit movement. Contacts the P site tRNA; the 5S rRNA and some of its associated proteins might help stabilize positioning of ribosome-bound tRNAs. This chain is Large ribosomal subunit protein uL5, found in Bartonella tribocorum (strain CIP 105476 / IBS 506).